The sequence spans 176 residues: Urease accessory protein UreE (176 aa).

The interval 134-176 (FTPEGGAYGHGRTHAHEHGHTNHHGQHHDHADHGHSHDHSHDQ) is disordered. Over residues 161 to 176 (HDHADHGHSHDHSHDQ) the composition is skewed to basic and acidic residues.

The protein belongs to the UreE family.

It is found in the cytoplasm. Its function is as follows. Involved in urease metallocenter assembly. Binds nickel. Probably functions as a nickel donor during metallocenter assembly. This is Urease accessory protein UreE from Ruegeria sp. (strain TM1040) (Silicibacter sp.).